Consider the following 349-residue polypeptide: Phenylalanine--tRNA ligase alpha subunit (349 aa).

Glu-262 is a Mg(2+) binding site.

It belongs to the class-II aminoacyl-tRNA synthetase family. Phe-tRNA synthetase alpha subunit type 1 subfamily. In terms of assembly, tetramer of two alpha and two beta subunits. Mg(2+) serves as cofactor.

The protein resides in the cytoplasm. The enzyme catalyses tRNA(Phe) + L-phenylalanine + ATP = L-phenylalanyl-tRNA(Phe) + AMP + diphosphate + H(+). In Sorangium cellulosum (strain So ce56) (Polyangium cellulosum (strain So ce56)), this protein is Phenylalanine--tRNA ligase alpha subunit.